The primary structure comprises 691 residues: Elongation factor G (691 aa).

Positions 8-282 (EKTRNIGIMA…AVVDYLPSPV (275 aa)) constitute a tr-type G domain. Residues 17–24 (AHIDAGKT), 81–85 (DTPGH), and 135–138 (NKMD) contribute to the GTP site.

Belongs to the TRAFAC class translation factor GTPase superfamily. Classic translation factor GTPase family. EF-G/EF-2 subfamily.

The protein localises to the cytoplasm. Catalyzes the GTP-dependent ribosomal translocation step during translation elongation. During this step, the ribosome changes from the pre-translocational (PRE) to the post-translocational (POST) state as the newly formed A-site-bound peptidyl-tRNA and P-site-bound deacylated tRNA move to the P and E sites, respectively. Catalyzes the coordinated movement of the two tRNA molecules, the mRNA and conformational changes in the ribosome. In Caldicellulosiruptor saccharolyticus (strain ATCC 43494 / DSM 8903 / Tp8T 6331), this protein is Elongation factor G.